The chain runs to 295 residues: Excinuclease cho (295 aa).

A GIY-YIG domain is found at 33–108; that stretch reads TRPGVYLFHG…IKEQQPLFNK (76 aa).

Functionally, incises the DNA at the 3' side of a lesion during nucleotide excision repair. Incises the DNA farther away from the lesion than UvrC. Not able to incise the 5' site of a lesion. In vitro, the incision activity of Cho is UvrA and UvrB dependent. When a lesion remains because UvrC is not able to induce the 3' incision, Cho incises the DNA. Then UvrC makes the 5' incision. The combined action of Cho and UvrC broadens the substrate range of nucleotide excision repair. In Escherichia coli (strain K12), this protein is Excinuclease cho (cho).